A 693-amino-acid chain; its full sequence is Exocyst complex component 7 (693 aa).

Serine 236 carries the post-translational modification Phosphoserine. The disordered stretch occupies residues 236-259 (SWGHEALRPRHSGRQTEPKKTTSA).

This sequence belongs to the EXO70 family. As to quaternary structure, the exocyst complex is composed of Sec3/Exoc1, Sec5/Exoc2, Sec6/Exoc3, Sec8/Exoc4, Sec10/Exoc5, Sec15/Exoc6, Exo70/Exoc7 and Exo84/Exoc8.

Its function is as follows. Required for exocytosis. Thought to function in intracellular vesicle targeting and docking before SNARE complex formation. This is Exocyst complex component 7 from Drosophila melanogaster (Fruit fly).